The following is a 463-amino-acid chain: Glutamate--tRNA ligase 1 (463 aa).

Residues 10-20 (PSPTGFLHIGS) carry the 'HIGH' region motif. The 'KMSKS' region motif lies at 239–243 (KLSKR). ATP is bound at residue Lys-242.

The protein belongs to the class-I aminoacyl-tRNA synthetase family. Glutamate--tRNA ligase type 1 subfamily. Monomer.

It localises to the cytoplasm. It carries out the reaction tRNA(Glu) + L-glutamate + ATP = L-glutamyl-tRNA(Glu) + AMP + diphosphate. Catalyzes the attachment of glutamate to tRNA(Glu) in a two-step reaction: glutamate is first activated by ATP to form Glu-AMP and then transferred to the acceptor end of tRNA(Glu). In Rickettsia canadensis (strain McKiel), this protein is Glutamate--tRNA ligase 1.